Consider the following 247-residue polypeptide: Triosephosphate isomerase (247 aa).

10 to 12 lines the substrate pocket; sequence NWK. The active-site Electrophile is His92. Catalysis depends on Glu164, which acts as the Proton acceptor. Substrate-binding positions include Gly170, Ser209, and 230–231; that span reads GG.

This sequence belongs to the triosephosphate isomerase family. In terms of assembly, homodimer.

The protein resides in the cytoplasm. It catalyses the reaction D-glyceraldehyde 3-phosphate = dihydroxyacetone phosphate. The protein operates within carbohydrate biosynthesis; gluconeogenesis. It participates in carbohydrate degradation; glycolysis; D-glyceraldehyde 3-phosphate from glycerone phosphate: step 1/1. Involved in the gluconeogenesis. Catalyzes stereospecifically the conversion of dihydroxyacetone phosphate (DHAP) to D-glyceraldehyde-3-phosphate (G3P). This chain is Triosephosphate isomerase, found in Alcanivorax borkumensis (strain ATCC 700651 / DSM 11573 / NCIMB 13689 / SK2).